The chain runs to 597 residues: Zinc finger CCCH domain-containing protein 29 (597 aa).

2 ANK repeats span residues Glu76 to Arg106 and Glu111 to Cys143. 2 consecutive C3H1-type zinc fingers follow at residues Pro254–Phe281 and Gln289–Asp313. The span at Ala320 to Glu337 shows a compositional bias: polar residues. The interval Ala320–Met341 is disordered.

As to expression, expressed in roots and anthers.

Its subcellular location is the nucleus. Involved in salt stress response. May positively modulate plant tolerance to salt stress. In Arabidopsis thaliana (Mouse-ear cress), this protein is Zinc finger CCCH domain-containing protein 29.